The chain runs to 262 residues: Expansin-A21 (262 aa).

Residues 1-29 (MKLLEKMTYVECFMIIMATWFMFISYSHG) form the signal peptide. One can recognise an Expansin-like EG45 domain in the interval 64-169 (EGACGYGDLN…RRVPCAKTGG (106 aa)). One can recognise an Expansin-like CBD domain in the interval 179–258 (NILTILPYNV…SWGFGQTFDG (80 aa)).

This sequence belongs to the expansin family. Expansin A subfamily.

The protein localises to the secreted. It localises to the cell wall. Its subcellular location is the membrane. Functionally, causes loosening and extension of plant cell walls by disrupting non-covalent bonding between cellulose microfibrils and matrix glucans. No enzymatic activity has been found. This Arabidopsis thaliana (Mouse-ear cress) protein is Expansin-A21 (EXPA21).